The primary structure comprises 2845 residues: Multiple epidermal growth factor-like domains protein 8 (2845 aa).

Positions 1–27 (MALGKVLAMALVLALAVLGSLSPGARA) are cleaved as a signal peptide. Over 28-2647 (GDCKGQRQVL…FFRQDQAHID (2620 aa)) the chain is Extracellular. Intrachain disulfides connect Cys-30/Cys-57, Cys-142/Cys-152, Cys-146/Cys-158, Cys-174/Cys-184, Cys-178/Cys-191, and Cys-193/Cys-202. The region spanning 30–140 (CKGQRQVLRE…LGFNASFRFS (111 aa)) is the CUB 1 domain. N-linked (GlcNAc...) asparagine glycosylation is present at Asn-50. 2 EGF-like domains span residues 138–168 (RFSL…GGPD) and 170–203 (GLQE…RACD). The N-linked (GlcNAc...) asparagine glycan is linked to Asn-217. 6 Kelch repeats span residues 241-287 (LLAV…AVAW), 290-338 (SLVL…AGHA), 346-399 (WLYV…FHAP), 402-453 (ALLV…FHTA), 459-511 (YMVV…APPS), and 525-575 (VLLV…SRDP). 3 consecutive PSI domains span residues 561–613 (YCSM…GDCQ), 847–899 (SCTS…TLCP), and 900–947 (LCEE…EECP). An N-linked (GlcNAc...) asparagine glycan is attached at Asn-1048. One can recognise an EGF-like 3; calcium-binding domain in the interval 1074-1115 (DVDECRLGLARCHPRATCLNTPLSYECHCQRGYQGDGISHCN). Intrachain disulfides connect Cys-1078-Cys-1091, Cys-1085-Cys-1100, Cys-1102-Cys-1114, Cys-1163-Cys-1171, Cys-1165-Cys-1179, Cys-1182-Cys-1191, Cys-1194-Cys-1208, Cys-1211-Cys-1224, Cys-1213-Cys-1231, Cys-1233-Cys-1242, Cys-1245-Cys-1259, Cys-1263-Cys-1302, Cys-1336-Cys-1367, Cys-1407-Cys-1421, Cys-1415-Cys-1433, and Cys-1435-Cys-1444. Laminin EGF-like domains lie at 1163–1210 (CGCS…GCRP) and 1211–1261 (CQCN…SCFR). Residues 1263 to 1405 (CGGRALLTNV…WGFNASVGSA (143 aa)) enclose the CUB 2 domain. Asn-1271 is a glycosylation site (N-linked (GlcNAc...) asparagine). Position 1353 is a phosphothreonine (Thr-1353). Residues 1403–1445 (GSARCGSGGPGSCPVPQECVPQDGAAGAGLCRCPQGWAGPHCR) enclose the EGF-like 4 domain. Kelch repeat units follow at residues 1522-1570 (TLWM…SFHA), 1580-1626 (AMYL…HTLT), 1632-1679 (SLLL…SAVY), 1685-1735 (SLYV…VRGS), 1796-1843 (TMVV…ESVA), and 1852-1898 (RLYI…CHGA). The segment at 1726–1745 (RDRMRNVRGSSRGLGQVPGE) is disordered. PSI domains lie at 1876–1916 (PCRL…SPCS), 1924–1979 (ECRR…NDCR), 2060–2118 (PCHL…ESCS), and 2120–2177 (GCAQ…LSCP). Residue Asn-2066 is glycosylated (N-linked (GlcNAc...) asparagine). The region spanning 2178 to 2216 (PEDECANGHHDCNETQNCHDQPHGYECSCKTGYTMDNMT) is the EGF-like 5 domain. Disulfide bonds link Cys-2182/Cys-2195 and Cys-2189/Cys-2204. Asn-2229 carries an N-linked (GlcNAc...) asparagine glycan. 8 cysteine pairs are disulfide-bonded: Cys-2253–Cys-2261, Cys-2255–Cys-2270, Cys-2273–Cys-2282, Cys-2285–Cys-2299, Cys-2380–Cys-2389, Cys-2382–Cys-2397, Cys-2399–Cys-2424, and Cys-2427–Cys-2441. 2 Laminin EGF-like domains span residues 2253-2301 (CRCN…TCRP) and 2380-2443 (CQCN…QCYR). Residues 2523 to 2564 (TVHIQPPPAPPPPPPPADGGPRGAGDPGGAGASSGPGAPAEP) form a disordered region. Positions 2527–2540 (QPPPAPPPPPPPAD) are enriched in pro residues. The span at 2542 to 2556 (GPRGAGDPGGAGASS) shows a compositional bias: gly residues. The chain crosses the membrane as a helical span at residues 2648–2668 (LFVFFSVFFSCFFLFLSLCVL). Residues 2669-2845 (LWKAKQALDQ…SQDNLTSMSL (177 aa)) are Cytoplasmic-facing. The segment covering 2817–2831 (GGGAGGSGHGTGAGR) has biased composition (gly residues). Positions 2817-2845 (GGGAGGSGHGTGAGRKGLLSQDNLTSMSL) are disordered. Residues 2836–2845 (SQDNLTSMSL) are compositionally biased toward polar residues.

It is found in the membrane. Its function is as follows. Acts as a negative regulator of hedgehog signaling. This chain is Multiple epidermal growth factor-like domains protein 8 (MEGF8), found in Homo sapiens (Human).